A 278-amino-acid polypeptide reads, in one-letter code: Large ribosomal subunit protein uL2 (278 aa).

A disordered region spans residues 222 to 278; it reads GVVMNPIDHPHGGGEGRTSGGRHPVTPWGKPTKGKKTRSNKSTNKFILISRHKRKKK.

It belongs to the universal ribosomal protein uL2 family. In terms of assembly, part of the 50S ribosomal subunit. Forms a bridge to the 30S subunit in the 70S ribosome.

Functionally, one of the primary rRNA binding proteins. Required for association of the 30S and 50S subunits to form the 70S ribosome, for tRNA binding and peptide bond formation. It has been suggested to have peptidyltransferase activity; this is somewhat controversial. Makes several contacts with the 16S rRNA in the 70S ribosome. This Afipia carboxidovorans (strain ATCC 49405 / DSM 1227 / KCTC 32145 / OM5) (Oligotropha carboxidovorans) protein is Large ribosomal subunit protein uL2.